Here is a 183-residue protein sequence, read N- to C-terminus: ATP synthase subunit delta (183 aa).

It belongs to the ATPase delta chain family. In terms of assembly, F-type ATPases have 2 components, F(1) - the catalytic core - and F(0) - the membrane proton channel. F(1) has five subunits: alpha(3), beta(3), gamma(1), delta(1), epsilon(1). CF(0) has four main subunits: a(1), b(1), b'(1) and c(10-14). The alpha and beta chains form an alternating ring which encloses part of the gamma chain. F(1) is attached to F(0) by a central stalk formed by the gamma and epsilon chains, while a peripheral stalk is formed by the delta, b and b' chains.

It is found in the cellular thylakoid membrane. In terms of biological role, f(1)F(0) ATP synthase produces ATP from ADP in the presence of a proton or sodium gradient. F-type ATPases consist of two structural domains, F(1) containing the extramembraneous catalytic core and F(0) containing the membrane proton channel, linked together by a central stalk and a peripheral stalk. During catalysis, ATP synthesis in the catalytic domain of F(1) is coupled via a rotary mechanism of the central stalk subunits to proton translocation. Its function is as follows. This protein is part of the stalk that links CF(0) to CF(1). It either transmits conformational changes from CF(0) to CF(1) or is implicated in proton conduction. The polypeptide is ATP synthase subunit delta (Trichormus variabilis (strain ATCC 29413 / PCC 7937) (Anabaena variabilis)).